The chain runs to 258 residues: Ribonuclease PH (258 aa).

Phosphate contacts are provided by residues R86 and 124-126 (GTR).

This sequence belongs to the RNase PH family. As to quaternary structure, homohexameric ring arranged as a trimer of dimers.

The catalysed reaction is tRNA(n+1) + phosphate = tRNA(n) + a ribonucleoside 5'-diphosphate. Functionally, phosphorolytic 3'-5' exoribonuclease that plays an important role in tRNA 3'-end maturation. Removes nucleotide residues following the 3'-CCA terminus of tRNAs; can also add nucleotides to the ends of RNA molecules by using nucleoside diphosphates as substrates, but this may not be physiologically important. Probably plays a role in initiation of 16S rRNA degradation (leading to ribosome degradation) during starvation. The chain is Ribonuclease PH from Caldicellulosiruptor saccharolyticus (strain ATCC 43494 / DSM 8903 / Tp8T 6331).